Reading from the N-terminus, the 335-residue chain is Nucleoid-associated protein KPN78578_25800 (335 aa).

This sequence belongs to the YejK family.

Its subcellular location is the cytoplasm. It is found in the nucleoid. The chain is Nucleoid-associated protein KPN78578_25800 from Klebsiella pneumoniae subsp. pneumoniae (strain ATCC 700721 / MGH 78578).